Consider the following 525-residue polypeptide: GMP synthase [glutamine-hydrolyzing] (525 aa).

Positions 7–207 (RILVIDFGSQ…ITCICRCKSS (201 aa)) constitute a Glutamine amidotransferase type-1 domain. The active-site Nucleophile is Cys84. Active-site residues include His181 and Glu183. One can recognise a GMPS ATP-PPase domain in the interval 208-400 (WKIANIIDDI…LGIPYDIAYR (193 aa)). Position 235 to 241 (235 to 241 (SGGIDSL)) interacts with ATP.

In terms of assembly, homodimer.

The catalysed reaction is XMP + L-glutamine + ATP + H2O = GMP + L-glutamate + AMP + diphosphate + 2 H(+). Its pathway is purine metabolism; GMP biosynthesis; GMP from XMP (L-Gln route): step 1/1. Its function is as follows. Catalyzes the synthesis of GMP from XMP. The protein is GMP synthase [glutamine-hydrolyzing] of Blochmanniella pennsylvanica (strain BPEN).